Here is a 364-residue protein sequence, read N- to C-terminus: Fructose-bisphosphate aldolase A (364 aa).

Residue Thr-9 is modified to Phosphothreonine. 2 positions are modified to phosphoserine: Ser-36 and Ser-39. Position 42 is an N6-acetyllysine; alternate (Lys-42). Lys-42 is covalently cross-linked (Glycyl lysine isopeptide (Lys-Gly) (interchain with G-Cter in SUMO1); alternate). A Glycyl lysine isopeptide (Lys-Gly) (interchain with G-Cter in SUMO2); alternate cross-link involves residue Lys-42. Arg-43 serves as a coordination point for beta-D-fructose 1,6-bisphosphate. Ser-46 bears the Phosphoserine mark. Lys-99 carries the N6-(2-hydroxyisobutyryl)lysine modification. Lys-108 carries the N6-acetyllysine modification. Lys-111 is modified (N6-acetyllysine; alternate). Lys-111 carries the post-translational modification N6-malonyllysine; alternate. Phosphoserine is present on Ser-132. Position 147 is an N6-(2-hydroxyisobutyryl)lysine (Lys-147). Glu-188 functions as the Proton acceptor in the catalytic mechanism. Lys-230 acts as the Schiff-base intermediate with dihydroxyacetone-P in catalysis. Ser-272 is modified (phosphoserine). Residues 272-274, Ser-301, and Arg-304 contribute to the beta-D-fructose 1,6-bisphosphate site; that span reads SGG. Lys-312 carries the N6-malonyllysine modification. N6-acetyllysine is present on Lys-330. Residue Asn-361 is modified to Deamidated asparagine; in form beta.

Belongs to the class I fructose-bisphosphate aldolase family. As to quaternary structure, homotetramer. Interacts with SNX9 and WAS. Interacts with FBP2; the interaction blocks FBP2 inhibition by physiological concentrations of AMP and reduces inhibition by Ca(2+). Post-translationally, asn-361 in form alpha is deaminated to Asp in form beta.

It is found in the cytoplasm. It localises to the myofibril. The protein resides in the sarcomere. Its subcellular location is the i band. The protein localises to the m line. The catalysed reaction is beta-D-fructose 1,6-bisphosphate = D-glyceraldehyde 3-phosphate + dihydroxyacetone phosphate. Its pathway is carbohydrate degradation; glycolysis; D-glyceraldehyde 3-phosphate and glycerone phosphate from D-glucose: step 4/4. Plays a key role in glycolysis and gluconeogenesis. In addition, may also function as scaffolding protein. The polypeptide is Fructose-bisphosphate aldolase A (ALDOA) (Oryctolagus cuniculus (Rabbit)).